Here is a 128-residue protein sequence, read N- to C-terminus: Sulfurtransferase TusD (128 aa).

The active-site Cysteine persulfide intermediate is Cys-78.

This sequence belongs to the DsrE/TusD family. Heterohexamer, formed by a dimer of trimers. The hexameric TusBCD complex contains 2 copies each of TusB, TusC and TusD. The TusBCD complex interacts with TusE.

The protein localises to the cytoplasm. Functionally, part of a sulfur-relay system required for 2-thiolation of 5-methylaminomethyl-2-thiouridine (mnm(5)s(2)U) at tRNA wobble positions. Accepts sulfur from TusA and transfers it in turn to TusE. The chain is Sulfurtransferase TusD from Erwinia tasmaniensis (strain DSM 17950 / CFBP 7177 / CIP 109463 / NCPPB 4357 / Et1/99).